Reading from the N-terminus, the 172-residue chain is Translation initiation factor IF-3 (172 aa).

Belongs to the IF-3 family. As to quaternary structure, monomer.

Its subcellular location is the cytoplasm. In terms of biological role, IF-3 binds to the 30S ribosomal subunit and shifts the equilibrium between 70S ribosomes and their 50S and 30S subunits in favor of the free subunits, thus enhancing the availability of 30S subunits on which protein synthesis initiation begins. This chain is Translation initiation factor IF-3, found in Sulfurimonas denitrificans (strain ATCC 33889 / DSM 1251) (Thiomicrospira denitrificans (strain ATCC 33889 / DSM 1251)).